A 503-amino-acid polypeptide reads, in one-letter code: Carboxyl-terminal PDZ ligand of neuronal nitric oxide synthase protein (503 aa).

The PID domain maps to 26–191; it reads FQHGISFEAK…ESERNSDGSG (166 aa). The tract at residues 170 to 212 is disordered; it reads HTQQNADGQEDGESERNSDGSGDPGRQLTGAERVSTAAAEETD. 4 positions are modified to phosphoserine: Ser183, Ser187, Ser190, and Ser262. Positions 318-359 form a coiled coil; the sequence is AAEAAARLEAQARVHQLLLQNKDMLQHISLLVKQVQELELKL. A phosphoserine mark is found at Ser367, Ser370, Ser397, and Ser413. The segment at 491–503 is interaction with NOS1; sequence QELGDSLDDEIAV. Residues 501-503 carry the PDZ-binding motif; the sequence is IAV.

In terms of assembly, interacts with the PDZ domain of NOS1 or the second PDZ domain of DLG4 through its C-terminus. Interacts with RASD1 and SYN1, SYN2 and SYN3 via its PID domain. Forms a ternary complex with NOS1 and SYN1. Forms a ternary complex with NOS1 and RASD1.

The protein resides in the cell projection. It localises to the filopodium. Its subcellular location is the podosome. Its function is as follows. Adapter protein involved in neuronal nitric-oxide (NO) synthesis regulation via its association with nNOS/NOS1. The complex formed with NOS1 and synapsins is necessary for specific NO and synapsin functions at a presynaptic level. Mediates an indirect interaction between NOS1 and RASD1 leading to enhance the ability of NOS1 to activate RASD1. Competes with DLG4 for interaction with NOS1, possibly affecting NOS1 activity by regulating the interaction between NOS1 and DLG4. In kidney podocytes, plays a role in podosomes and filopodia formation through CDC42 activation. This chain is Carboxyl-terminal PDZ ligand of neuronal nitric oxide synthase protein, found in Mus musculus (Mouse).